A 427-amino-acid chain; its full sequence is MTIPTEISCPEEDAFQLLDKFSWFPSDDQRRWWEYTGPYLLKLLRDAKYPQKDQVPCLYLLQQLLVPYLGTFPVVGQAPLPWWSNVTTYGVPFELSWNLLHNIVRIGFEPLSHLAESGVDAFNKTAPEECVSRLACLDNTIDLARFRHFQHHLLVTPEEETWLLREKAPLPKSGRGQQTLAVEFQNGGISAKAYFFPGMKSLATGLSPGKLILDSIERLALPGLKEPVHHLRSTLGLQDDGHPTDTAIAPFLLGVDLCTPERSRLKFYVTDQVVSWDRVADMWTLRGKRLEDPQCADGLALLRKLWDLLAIPEGYRSNIRPDFAFGTPPPEDYRPVMMANWTLSPKKKFPDPQIYLLTVGMNDAVVMDALVAFYEVLGWTDLASTYKDKVASYFPGPDFTKTNYIHSGVSFSYRHSKPYLSVYYSPF.

Substrate is bound at residue Glu-94. Dimethylallyl diphosphate contacts are provided by Arg-105, Lys-192, Tyr-194, Tyr-268, Gln-353, Tyr-355, Tyr-419, and Tyr-423.

It belongs to the tryptophan dimethylallyltransferase family.

It catalyses the reaction 12alpha,13alpha-dihydroxyfumitremorgin C + dimethylallyl diphosphate = fumitremorgin B + diphosphate. Its pathway is mycotoxin biosynthesis. Functionally, 12-alpha,13-alpha-dihydroxyfumitremorgin C prenyltransferase; part of the gene cluster that mediates the biosynthesis of fumitremorgins, indole alkaloids that carry not only intriguing chemical structures, but also interesting biological and pharmacological activities. The biosynthesis of fumitremorgin-type alkaloids begins by condensation of the two amino acids L-tryptophan and L-proline to brevianamide F, catalyzed by the non-ribosomal peptide synthetase ftmA. Brevianamide F is then prenylated by the prenyltransferase ftmPT1/ftmB in the presence of dimethylallyl diphosphate, resulting in the formation of tryprostatin B. The three cytochrome P450 monooxygenases, ftmP450-1/ftmC, ftmP450-2/ftmE and ftmP450-3/FtmG, are responsible for the conversion of tryprostatin B to 6-hydroxytryprostatin B, tryprostatin A to fumitremorgin C and fumitremorgin C to 12,13-dihydroxyfumitremorgin C, respectively. The putative methyltransferase ftmMT/ftmD is expected for the conversion of 6-hydroxytryprostatin B to tryprostatin A. FtmPT2/FtmH catalyzes the prenylation of 12,13-dihydroxyfumitre-morgin C in the presence of dimethylallyl diphosphate, resulting in the formation of fumitremorgin B. Fumitremorgin B is further converted to verruculogen by ftmOx1/ftmF via the insertion of an endoperoxide bond between the two prenyl moieties. In some fungal species, verruculogen is further converted to fumitremorgin A, but the enzymes involved in this step have not been identified yet. This Aspergillus fumigatus (Neosartorya fumigata) protein is 12-alpha,13-alpha-dihydroxyfumitremorgin C prenyltransferase.